A 264-amino-acid chain; its full sequence is Formamidopyrimidine-DNA glycosylase (264 aa).

Pro2 functions as the Schiff-base intermediate with DNA in the catalytic mechanism. Residue Glu3 is the Proton donor of the active site. Lys58 serves as the catalytic Proton donor; for beta-elimination activity. DNA is bound by residues His89, Arg107, and Arg144. The FPG-type zinc-finger motif lies at Arg229–Lys263. The active-site Proton donor; for delta-elimination activity is the Arg253.

This sequence belongs to the FPG family. Monomer. Zn(2+) serves as cofactor.

It carries out the reaction Hydrolysis of DNA containing ring-opened 7-methylguanine residues, releasing 2,6-diamino-4-hydroxy-5-(N-methyl)formamidopyrimidine.. The enzyme catalyses 2'-deoxyribonucleotide-(2'-deoxyribose 5'-phosphate)-2'-deoxyribonucleotide-DNA = a 3'-end 2'-deoxyribonucleotide-(2,3-dehydro-2,3-deoxyribose 5'-phosphate)-DNA + a 5'-end 5'-phospho-2'-deoxyribonucleoside-DNA + H(+). Involved in base excision repair of DNA damaged by oxidation or by mutagenic agents. Acts as a DNA glycosylase that recognizes and removes damaged bases. Has a preference for oxidized purines, such as 7,8-dihydro-8-oxoguanine (8-oxoG). Has AP (apurinic/apyrimidinic) lyase activity and introduces nicks in the DNA strand. Cleaves the DNA backbone by beta-delta elimination to generate a single-strand break at the site of the removed base with both 3'- and 5'-phosphates. The sequence is that of Formamidopyrimidine-DNA glycosylase from Solibacter usitatus (strain Ellin6076).